A 195-amino-acid polypeptide reads, in one-letter code: Inner membrane protein YohC (195 aa).

Topologically, residues 1-32 (MSHVWGLFSHPDREMQVINRENETISHHYTHH) are cytoplasmic. A helical membrane pass occupies residues 33–55 (VLLMAAIPVICAFIGTTQIGWNF). The Periplasmic segment spans residues 56–64 (GDGTILKLS). A helical membrane pass occupies residues 65–87 (WFTGLALAVLFYGVMLAGVAVMG). The Cytoplasmic segment spans residues 88–107 (RVIWWMARNYPQRPSLAHCM). A helical membrane pass occupies residues 108–130 (VFAGYVATPLFLSGLVALYPLVW). The Periplasmic portion of the chain corresponds to 131–134 (LCAL). A helical transmembrane segment spans residues 135 to 157 (VGTVALFYTGYLLYLGIPSFLNI). At 158 to 169 (NKEEGLSFSSST) the chain is on the cytoplasmic side. The chain crosses the membrane as a helical span at residues 170 to 192 (LAIGVLVLEVLLALTVILWGYGY). Topologically, residues 193–195 (RLF) are periplasmic.

It is found in the cell inner membrane. The protein is Inner membrane protein YohC (yohC) of Escherichia coli O6:H1 (strain CFT073 / ATCC 700928 / UPEC).